A 513-amino-acid polypeptide reads, in one-letter code: GMP synthase [glutamine-hydrolyzing] (513 aa).

The Glutamine amidotransferase type-1 domain maps to 8 to 198 (MILVLDFGSQ…VFGVCECEGE (191 aa)). Catalysis depends on C85, which acts as the Nucleophile. Residues H172 and E174 contribute to the active site. The 190-residue stretch at 199-388 (WSMENFIEIE…LGIPDEIVWR (190 aa)) folds into the GMPS ATP-PPase domain. 227-233 (GGVDSSV) lines the ATP pocket.

Homodimer.

The catalysed reaction is XMP + L-glutamine + ATP + H2O = GMP + L-glutamate + AMP + diphosphate + 2 H(+). Its pathway is purine metabolism; GMP biosynthesis; GMP from XMP (L-Gln route): step 1/1. Its function is as follows. Catalyzes the synthesis of GMP from XMP. This Bacillus subtilis (strain 168) protein is GMP synthase [glutamine-hydrolyzing] (guaA).